Consider the following 281-residue polypeptide: NAD kinase (281 aa).

Asp-61 functions as the Proton acceptor in the catalytic mechanism. Residues 61-62 (DG), 134-135 (ND), Arg-145, Asp-164, 175-180 (TAYSLS), and Gln-234 each bind NAD(+).

It belongs to the NAD kinase family. A divalent metal cation serves as cofactor.

It is found in the cytoplasm. The catalysed reaction is NAD(+) + ATP = ADP + NADP(+) + H(+). Its function is as follows. Involved in the regulation of the intracellular balance of NAD and NADP, and is a key enzyme in the biosynthesis of NADP. Catalyzes specifically the phosphorylation on 2'-hydroxyl of the adenosine moiety of NAD to yield NADP. This Clostridium botulinum (strain Kyoto / Type A2) protein is NAD kinase.